The following is a 486-amino-acid chain: Galactose-1-phosphate uridylyltransferase (486 aa).

The protein belongs to the galactose-1-phosphate uridylyltransferase type 2 family.

It is found in the cytoplasm. The catalysed reaction is alpha-D-galactose 1-phosphate + UDP-alpha-D-glucose = alpha-D-glucose 1-phosphate + UDP-alpha-D-galactose. It participates in carbohydrate metabolism; galactose metabolism. This Lacticaseibacillus casei (strain BL23) (Lactobacillus casei) protein is Galactose-1-phosphate uridylyltransferase.